The chain runs to 390 residues: Lipoyl synthase, mitochondrial (390 aa).

Residues 1-18 (MALYRAPKLQRSLLNRCL) constitute a mitochondrion transit peptide. Residues C99, C104, C110, C137, C141, C144, and S351 each coordinate [4Fe-4S] cluster. The 221-residue stretch at 120 to 340 (AEGRSAATAT…KQVAEDLGFL (221 aa)) folds into the Radical SAM core domain.

It belongs to the radical SAM superfamily. Lipoyl synthase family. [4Fe-4S] cluster serves as cofactor.

Its subcellular location is the mitochondrion. It carries out the reaction [[Fe-S] cluster scaffold protein carrying a second [4Fe-4S](2+) cluster] + N(6)-octanoyl-L-lysyl-[protein] + 2 oxidized [2Fe-2S]-[ferredoxin] + 2 S-adenosyl-L-methionine + 4 H(+) = [[Fe-S] cluster scaffold protein] + N(6)-[(R)-dihydrolipoyl]-L-lysyl-[protein] + 4 Fe(3+) + 2 hydrogen sulfide + 2 5'-deoxyadenosine + 2 L-methionine + 2 reduced [2Fe-2S]-[ferredoxin]. It functions in the pathway protein modification; protein lipoylation via endogenous pathway; protein N(6)-(lipoyl)lysine from octanoyl-[acyl-carrier-protein]: step 2/2. Its function is as follows. Catalyzes the radical-mediated insertion of two sulfur atoms into the C-6 and C-8 positions of the octanoyl moiety bound to the lipoyl domains of lipoate-dependent enzymes, thereby converting the octanoylated domains into lipoylated derivatives. The sequence is that of Lipoyl synthase, mitochondrial from Coprinopsis cinerea (strain Okayama-7 / 130 / ATCC MYA-4618 / FGSC 9003) (Inky cap fungus).